The chain runs to 182 residues: MFKYIGDIVKGTGTQLRSMVMVFGHGFRKRDTLQYPEEQVYLPPRYRGRIVLTRDPDGEERCVACNLCAVACPVGCISLQKAETEDGRWYPDFFRINFSRCIFCGLCEEACPTTAIQLTPDFEMADFKRQDLVYEKEDLLISGPGKNPDYNFYRVAGMAIGGKPKGAAQNEAEPINVKSLLP.

2 4Fe-4S ferredoxin-type domains span residues 52–82 (LTRD…LQKA) and 92–121 (DFFR…LTPD). 8 residues coordinate [4Fe-4S] cluster: Cys62, Cys65, Cys68, Cys72, Cys101, Cys104, Cys107, and Cys111.

It belongs to the complex I 23 kDa subunit family. In terms of assembly, NDH-1 is composed of 13 different subunits. Subunits NuoA, H, J, K, L, M, N constitute the membrane sector of the complex. Requires [4Fe-4S] cluster as cofactor.

It localises to the cell inner membrane. The enzyme catalyses a quinone + NADH + 5 H(+)(in) = a quinol + NAD(+) + 4 H(+)(out). In terms of biological role, NDH-1 shuttles electrons from NADH, via FMN and iron-sulfur (Fe-S) centers, to quinones in the respiratory chain. The immediate electron acceptor for the enzyme in this species is believed to be ubiquinone. Couples the redox reaction to proton translocation (for every two electrons transferred, four hydrogen ions are translocated across the cytoplasmic membrane), and thus conserves the redox energy in a proton gradient. This Pseudomonas syringae pv. tomato (strain ATCC BAA-871 / DC3000) protein is NADH-quinone oxidoreductase subunit I.